Here is a 289-residue protein sequence, read N- to C-terminus: 4-hydroxy-tetrahydrodipicolinate synthase (289 aa).

Position 43 (T43) interacts with pyruvate. Y131 (proton donor/acceptor) is an active-site residue. Catalysis depends on K160, which acts as the Schiff-base intermediate with substrate. A pyruvate-binding site is contributed by V200.

Belongs to the DapA family. Homotetramer; dimer of dimers.

The protein localises to the cytoplasm. It carries out the reaction L-aspartate 4-semialdehyde + pyruvate = (2S,4S)-4-hydroxy-2,3,4,5-tetrahydrodipicolinate + H2O + H(+). It participates in amino-acid biosynthesis; L-lysine biosynthesis via DAP pathway; (S)-tetrahydrodipicolinate from L-aspartate: step 3/4. Its function is as follows. Catalyzes the condensation of (S)-aspartate-beta-semialdehyde [(S)-ASA] and pyruvate to 4-hydroxy-tetrahydrodipicolinate (HTPA). The sequence is that of 4-hydroxy-tetrahydrodipicolinate synthase from Methanococcus maripaludis (strain DSM 14266 / JCM 13030 / NBRC 101832 / S2 / LL).